Here is an 800-residue protein sequence, read N- to C-terminus: Nuclear poly(A) polymerase 2 (800 aa).

ATP contacts are provided by residues 103 to 105 (FGS), 115 to 118 (ADID), aspartate 171, lysine 232, tyrosine 241, and 250 to 251 (GV). Aspartate 116, aspartate 118, and aspartate 171 together coordinate Mg(2+). 2 consecutive short sequence motifs (nuclear localization signal) follow at residues 487–494 (RRRQLPSF) and 533–540 (KRKNDDEI). The segment at 497 to 576 (PNGYKRSRQS…SGITTSGTPQ (80 aa)) is disordered. Over residues 527 to 538 (SVERYAKRKNDD) the composition is skewed to basic and acidic residues. The span at 564–575 (PDSSGITTSGTP) shows a compositional bias: polar residues.

This sequence belongs to the poly(A) polymerase family. Monomer. Forms a complex with cleavage and polyadenylation specificity factor (CPSF) subunits CPSF100, CPSF30, FIPS5 and PABN2. Requires Mg(2+) as cofactor. Mn(2+) serves as cofactor. As to expression, mostly expressed in flowers (highly in the style, receptacle and pedicel, but weakly in the vasculature of sepals) and hypocotyls, and, to a lower extent, in roots and stems. Barely detected in leaves (petioles and vascular system).

The protein localises to the nucleus. It is found in the cytoplasm. The catalysed reaction is RNA(n) + ATP = RNA(n)-3'-adenine ribonucleotide + diphosphate. Essential protein. Polymerase that creates the 3'-poly(A) tail of mRNA's. Also required for the endoribonucleolytic cleavage reaction at some polyadenylation sites. May acquire specificity through interaction with a cleavage and polyadenylation specificity factor (CPSF) at its C-terminus. Mediates the polyadenylation of RNAs that are associated with polynucleotide phosphorylase (e.g. PNP1). This is Nuclear poly(A) polymerase 2 from Arabidopsis thaliana (Mouse-ear cress).